A 27-amino-acid polypeptide reads, in one-letter code: Cysteine-rich venom protein tropirin (27 aa).

This sequence belongs to the CRISP family. Post-translationally, contains 8 disulfide bonds. As to expression, expressed by the venom gland.

Its subcellular location is the secreted. In terms of biological role, blocks contraction of smooth muscle elicited by high potassium-induced depolarization, but does not block caffeine-stimulated contraction. May target voltage-gated calcium channels on smooth muscle. The polypeptide is Cysteine-rich venom protein tropirin (Tropidechis carinatus (Australian rough-scaled snake)).